A 261-amino-acid chain; its full sequence is Zinc import ATP-binding protein ZnuC (261 aa).

The ABC transporter domain maps to 6–227 (IQLNNIHLRF…PEYLKLFGKQ (222 aa)). 38–45 (GPNGAGKS) provides a ligand contact to ATP.

The protein belongs to the ABC transporter superfamily. Zinc importer (TC 3.A.1.15.5) family. The complex is composed of two ATP-binding proteins (ZnuC), two transmembrane proteins (ZnuB) and a solute-binding protein (ZnuA).

It is found in the cell inner membrane. The enzyme catalyses Zn(2+)(out) + ATP(in) + H2O(in) = Zn(2+)(in) + ADP(in) + phosphate(in) + H(+)(in). In terms of biological role, part of the ABC transporter complex ZnuABC involved in zinc import. Responsible for energy coupling to the transport system. This Saccharophagus degradans (strain 2-40 / ATCC 43961 / DSM 17024) protein is Zinc import ATP-binding protein ZnuC.